The primary structure comprises 338 residues: Glycerol-1-phosphate dehydrogenase [NAD(P)+] (338 aa).

NAD(+)-binding positions include 81 to 85 and 103 to 106; these read GRPLD and TSAS. D108 contacts substrate. Residue S112 participates in NAD(+) binding. D157 contacts substrate. 2 residues coordinate Zn(2+): D157 and H238. H242 provides a ligand contact to substrate. Position 256 (H256) interacts with Zn(2+).

Belongs to the glycerol-1-phosphate dehydrogenase family. Homodimer. Zn(2+) is required as a cofactor.

It localises to the cytoplasm. It carries out the reaction sn-glycerol 1-phosphate + NAD(+) = dihydroxyacetone phosphate + NADH + H(+). The catalysed reaction is sn-glycerol 1-phosphate + NADP(+) = dihydroxyacetone phosphate + NADPH + H(+). The protein operates within membrane lipid metabolism; glycerophospholipid metabolism. Functionally, catalyzes the NAD(P)H-dependent reduction of dihydroxyacetonephosphate (DHAP or glycerone phosphate) to glycerol 1-phosphate (G1P). The G1P thus generated is used as the glycerophosphate backbone of phospholipids in the cellular membranes of Archaea. The protein is Glycerol-1-phosphate dehydrogenase [NAD(P)+] of Pyrobaculum calidifontis (strain DSM 21063 / JCM 11548 / VA1).